Consider the following 172-residue polypeptide: RNA pyrophosphohydrolase (172 aa).

In terms of domain architecture, Nudix hydrolase spans 6-149 (GYRPNVGIIL…KRDVYRMALK (144 aa)). The Nudix box motif lies at 38 to 59 (GGIKYGESPEQAMYRELMEEVG).

This sequence belongs to the Nudix hydrolase family. RppH subfamily. The cofactor is a divalent metal cation.

Accelerates the degradation of transcripts by removing pyrophosphate from the 5'-end of triphosphorylated RNA, leading to a more labile monophosphorylated state that can stimulate subsequent ribonuclease cleavage. This chain is RNA pyrophosphohydrolase, found in Methylobacillus flagellatus (strain ATCC 51484 / DSM 6875 / VKM B-1610 / KT).